The sequence spans 265 residues: Tetrapyrrole-binding protein, chloroplastic (265 aa).

Residues 1 to 24 form a disordered region; sequence MATTNSLHHHHHSSPSYTHHRNNL. The N-terminal 69 residues, 1-69, are a transit peptide targeting the chloroplast; sequence MATTNSLHHH…TAVSAVSTTN (69 aa). Over residues 7-23 the composition is skewed to basic residues; that stretch reads LHHHHHSSPSYTHHRNN.

Interacts with CHLH, the protoporphyrin IX-binding subunit of Mg-chelatase. Monomer or extremely compact dimer.

The protein resides in the plastid. Its subcellular location is the chloroplast membrane. Its function is as follows. Regulates chlorophyll synthesis and plastid-to-nucleus signal transduction by binding both the product and the substrate of Mg-chelatase, an enzyme that produces magnesium-protoporphyrin IX (Mg-Proto). Also activates Mg-chelatase. Neither binds abscisic acid (ABA) nor is involved in ABA signaling. In Arabidopsis thaliana (Mouse-ear cress), this protein is Tetrapyrrole-binding protein, chloroplastic (GUN4).